The following is a 537-amino-acid chain: 2-isopropylmalate synthase (537 aa).

One can recognise a Pyruvate carboxyltransferase domain in the interval 8–273 (IIIFDTTLRD…FLGRPVDSME (266 aa)). Residues aspartate 17, histidine 208, histidine 210, and asparagine 244 each coordinate Mn(2+). Positions 408-537 (RLELVQVSCG…PSEPVLTSKN (130 aa)) are regulatory domain.

It belongs to the alpha-IPM synthase/homocitrate synthase family. LeuA type 1 subfamily. As to quaternary structure, homodimer. Mn(2+) is required as a cofactor.

The protein resides in the cytoplasm. The enzyme catalyses 3-methyl-2-oxobutanoate + acetyl-CoA + H2O = (2S)-2-isopropylmalate + CoA + H(+). Its pathway is amino-acid biosynthesis; L-leucine biosynthesis; L-leucine from 3-methyl-2-oxobutanoate: step 1/4. Functionally, catalyzes the condensation of the acetyl group of acetyl-CoA with 3-methyl-2-oxobutanoate (2-ketoisovalerate) to form 3-carboxy-3-hydroxy-4-methylpentanoate (2-isopropylmalate). The chain is 2-isopropylmalate synthase from Crocosphaera subtropica (strain ATCC 51142 / BH68) (Cyanothece sp. (strain ATCC 51142)).